A 775-amino-acid chain; its full sequence is Homoaconitase, mitochondrial (775 aa).

The N-terminal 29 residues, 1 to 29 (MQSRLMPSGGPGRRWAFLRVPSTPQRRAF), are a transit peptide targeting the mitochondrion. [4Fe-4S] cluster is bound by residues cysteine 392, cysteine 461, and cysteine 464.

It belongs to the aconitase/IPM isomerase family. It depends on [4Fe-4S] cluster as a cofactor.

It is found in the mitochondrion. It carries out the reaction (2R,3S)-homoisocitrate = cis-homoaconitate + H2O. It participates in amino-acid biosynthesis; L-lysine biosynthesis via AAA pathway; L-alpha-aminoadipate from 2-oxoglutarate: step 3/5. Catalyzes the reversible hydration of cis-homoaconitate to (2R,3S)-homoisocitrate, a step in the alpha-aminoadipate pathway for lysine biosynthesis. The chain is Homoaconitase, mitochondrial (lys4) from Aspergillus oryzae (strain ATCC 42149 / RIB 40) (Yellow koji mold).